The sequence spans 105 residues: Small ribosomal subunit protein uS10 (105 aa).

The protein belongs to the universal ribosomal protein uS10 family. Part of the 30S ribosomal subunit.

Its function is as follows. Involved in the binding of tRNA to the ribosomes. The polypeptide is Small ribosomal subunit protein uS10 (Cyanothece sp. (strain PCC 7425 / ATCC 29141)).